The primary structure comprises 282 residues: Putative hydrolase Bamb_4846 (282 aa).

3 residues coordinate Mg(2+): glutamate 124, glutamate 126, and aspartate 155.

Belongs to the FAH family. It depends on Mg(2+) as a cofactor.

The chain is Putative hydrolase Bamb_4846 from Burkholderia ambifaria (strain ATCC BAA-244 / DSM 16087 / CCUG 44356 / LMG 19182 / AMMD) (Burkholderia cepacia (strain AMMD)).